The chain runs to 366 residues: Protein BIG GRAIN 1-like B (366 aa).

2 disordered regions span residues 42 to 73 (DSST…DFNR) and 129 to 148 (FERS…EHGS). Residues 56–73 (QNREDTRVSANRRDDFNR) are compositionally biased toward basic and acidic residues.

Belongs to the BIG GRAIN 1 (BG1) plant protein family.

The protein localises to the cell membrane. Involved in auxin transport. Regulator of the auxin signaling pathway. The chain is Protein BIG GRAIN 1-like B from Arabidopsis thaliana (Mouse-ear cress).